We begin with the raw amino-acid sequence, 425 residues long: Riboflavin biosynthesis protein RibBA (425 aa).

The DHBP synthase stretch occupies residues 1 to 204; the sequence is MTRLDSVERA…IADLIEWRRK (204 aa). D-ribulose 5-phosphate contacts are provided by residues 28–29, D33, 141–145, and E165; these read RE and RPGHT. E29 lines the Mg(2+) pocket. Position 144 (H144) interacts with Mg(2+). The tract at residues 205 to 425 is GTP cyclohydrolase II; sequence HEKHIERVAE…HLPGEFGGAL (221 aa). 259 to 263 serves as a coordination point for GTP; sequence RVHSE. Positions 264, 275, and 277 each coordinate Zn(2+). GTP contacts are provided by residues Q280, 303-305, and T325; that span reads EGR. D337 serves as the catalytic Proton acceptor; for GTP cyclohydrolase activity. The Nucleophile; for GTP cyclohydrolase activity role is filled by R339. The GTP site is built by T360 and K365.

It in the N-terminal section; belongs to the DHBP synthase family. The protein in the C-terminal section; belongs to the GTP cyclohydrolase II family. Mg(2+) is required as a cofactor. Mn(2+) serves as cofactor. It depends on Zn(2+) as a cofactor.

The catalysed reaction is D-ribulose 5-phosphate = (2S)-2-hydroxy-3-oxobutyl phosphate + formate + H(+). It carries out the reaction GTP + 4 H2O = 2,5-diamino-6-hydroxy-4-(5-phosphoribosylamino)-pyrimidine + formate + 2 phosphate + 3 H(+). Its pathway is cofactor biosynthesis; riboflavin biosynthesis; 2-hydroxy-3-oxobutyl phosphate from D-ribulose 5-phosphate: step 1/1. The protein operates within cofactor biosynthesis; riboflavin biosynthesis; 5-amino-6-(D-ribitylamino)uracil from GTP: step 1/4. Functionally, catalyzes the conversion of D-ribulose 5-phosphate to formate and 3,4-dihydroxy-2-butanone 4-phosphate. In terms of biological role, catalyzes the conversion of GTP to 2,5-diamino-6-ribosylamino-4(3H)-pyrimidinone 5'-phosphate (DARP), formate and pyrophosphate. In Mycobacterium marinum (strain ATCC BAA-535 / M), this protein is Riboflavin biosynthesis protein RibBA.